The sequence spans 60 residues: Mannitol-specific phosphotransferase enzyme IIA component (60 aa).

The PTS EIIA type-2 domain maps to 2–60; it reads SELFSNDNIFLNVNVNSQNEAIEKAGKALVDSGAVTDAYIQVVSTFMGNGLAIPHGTDD. Catalysis depends on histidine 56, which acts as the Tele-phosphohistidine intermediate. Residue histidine 56 is modified to Phosphohistidine; by HPr.

As to quaternary structure, homodimer or homotrimer. Seems to be a monomer when not phosphorylated.

It is found in the cytoplasm. The phosphoenolpyruvate-dependent sugar phosphotransferase system (sugar PTS), a major carbohydrate active transport system, catalyzes the phosphorylation of incoming sugar substrates concomitantly with their translocation across the cell membrane. The enzyme II CmtAB PTS system is involved in D-mannitol transport. In Staphylococcus aureus, this protein is Mannitol-specific phosphotransferase enzyme IIA component.